A 59-amino-acid chain; its full sequence is Large ribosomal subunit protein uL30 (59 aa).

The protein belongs to the universal ribosomal protein uL30 family. Part of the 50S ribosomal subunit.

The sequence is that of Large ribosomal subunit protein uL30 from Leptospira interrogans serogroup Icterohaemorrhagiae serovar copenhageni (strain Fiocruz L1-130).